A 631-amino-acid polypeptide reads, in one-letter code: Shootin-1 (631 aa).

An N-acetylmethionine modification is found at methionine 1. A phosphoserine mark is found at serine 3 and serine 4. Residues 7–353 (EKQLQLITSL…RVNQSENSVP (347 aa)) are a coiled coil. Serine 101 is modified (phosphoserine; by PAK1). Phosphoserine is present on serine 249. Disordered stretches follow at residues 343–404 (KRVN…EVTD) and 417–508 (IKKG…KSMP). The segment covering 352 to 369 (VPPPPPPPPPLPPPPPNP) has biased composition (pro residues). Serine 375 carries the phosphoserine modification. Residues 456–465 (LNKSTSSRSL) show a composition bias toward polar residues. Serine 473 bears the Phosphoserine mark. Position 487 is a phosphothreonine (threonine 487). Positions 490-505 (ADSSSPTGILATSESK) are enriched in polar residues. Position 494 is a phosphoserine (serine 494). The residue at position 496 (threonine 496) is a Phosphothreonine. Serine 506 and serine 515 each carry phosphoserine. The segment at 530-631 (FNNPCPLTPE…KTGETDSSNC (102 aa)) is disordered. Threonine 537 carries the phosphothreonine modification. Residues 590-602 (PQTKDQAAEKDPT) are compositionally biased toward basic and acidic residues.

Belongs to the shootin family. Interacts with L1CAM; this interaction occurs at axonal growth cones. Interacts with actin filament retrograde flow; this interaction is enhanced in a netrin-1- and PAK1-dependent manner and promotes F-actin-substrate coupling and concomitant formation of traction forces at axonal growth cones. Interacts with RUFY3. Interacts with PFN2. Interacts (via N-terminus) with KIF20B; this interaction is direct and promotes the association of SHTN1 to microtubules in primary neurons. Associates with microtubule. Phosphorylated on Ser-101 and Ser-249 by PAK1 through a CDC42- and RAC1-dependent signaling pathway, which enhances its association with F-actin retrograde flow in filopodia and lamellipodia of axonal growth cones. Phosphorylation on Ser-101 and Ser-249 is increased by netrin-1. In terms of tissue distribution, expressed in hippocampal neurons.

It is found in the perikaryon. It localises to the cell projection. The protein localises to the axon. Its subcellular location is the growth cone. The protein resides in the cytoplasm. It is found in the cytoskeleton. It localises to the filopodium. The protein localises to the lamellipodium. Functionally, involved in the generation of internal asymmetric signals required for neuronal polarization and neurite outgrowth. Mediates netrin-1-induced F-actin-substrate coupling or 'clutch engagement' within the axon growth cone through activation of CDC42, RAC1 and PAK1-dependent signaling pathway, thereby converting the F-actin retrograde flow into traction forces, concomitantly with filopodium extension and axon outgrowth. Plays a role in cytoskeletal organization by regulating the subcellular localization of phosphoinositide 3-kinase (PI3K) activity at the axonal growth cone. Also plays a role in regenerative neurite outgrowth. In the developing cortex, cooperates with KIF20B to promote both the transition from the multipolar to the bipolar stage and the radial migration of cortical neurons from the ventricular zone toward the superficial layer of the neocortex. Involved in the accumulation of phosphatidylinositol 3,4,5-trisphosphate (PIP3) in the growth cone of primary hippocampal neurons. The polypeptide is Shootin-1 (Mus musculus (Mouse)).